Consider the following 278-residue polypeptide: MESFGARLHRVVGERGPLCVGIDPHPGLLERWGLDDDVRGLERFAGTVVEALGDRVAVVKPQSAFFERFGSRGVAVLESTIRQLRTAGSLVLLDVKRGDIGSTVAAYASAYLDPSSPLHVDAVTVSPYLGVGALAPMFELAAAQGGGVFVLALTSNPEGAAVQRARTADGRTVAQLVIDEISQLNAGARPLGSVGLVVGATIGQTGHELAAVNGPLLAPGLGAQGASAADLRVVFGSSLPAVLPTYSREVLAAGPDVVALRGAADRVLADCRAALTGS.

Lys-96 functions as the Proton donor in the catalytic mechanism.

The protein belongs to the OMP decarboxylase family. Type 2 subfamily.

The enzyme catalyses orotidine 5'-phosphate + H(+) = UMP + CO2. It functions in the pathway pyrimidine metabolism; UMP biosynthesis via de novo pathway; UMP from orotate: step 2/2. The sequence is that of Orotidine 5'-phosphate decarboxylase from Salinispora tropica (strain ATCC BAA-916 / DSM 44818 / JCM 13857 / NBRC 105044 / CNB-440).